Reading from the N-terminus, the 75-residue chain is UPF0270 protein Pfl01_4103 (75 aa).

This sequence belongs to the UPF0270 family.

The protein is UPF0270 protein Pfl01_4103 of Pseudomonas fluorescens (strain Pf0-1).